The following is a 291-amino-acid chain: Acetylglutamate kinase (291 aa).

Substrate-binding positions include 64-65, arginine 86, and asparagine 190; that span reads GG.

It belongs to the acetylglutamate kinase family. ArgB subfamily.

It is found in the cytoplasm. It carries out the reaction N-acetyl-L-glutamate + ATP = N-acetyl-L-glutamyl 5-phosphate + ADP. Its pathway is amino-acid biosynthesis; L-arginine biosynthesis; N(2)-acetyl-L-ornithine from L-glutamate: step 2/4. In terms of biological role, catalyzes the ATP-dependent phosphorylation of N-acetyl-L-glutamate. The protein is Acetylglutamate kinase of Leptospira borgpetersenii serovar Hardjo-bovis (strain L550).